Consider the following 96-residue polypeptide: Venom protein 3.1 (96 aa).

Residues 1 to 25 (MKFSLISVFLFAVFLSNENIFQAIA) form the signal peptide. The segment at 45–84 (EAVMSSSLTNEEESRNWPHRATRNTLEKGQKRSPAARSEI) is disordered.

It belongs to the non-disulfide-bridged peptide (NDBP) superfamily. Expressed by the venom gland.

Its subcellular location is the secreted. The protein is Venom protein 3.1 of Lychas mucronatus (Chinese swimming scorpion).